Here is a 594-residue protein sequence, read N- to C-terminus: CRISPR-associated DNA-binding protein Cas12m (594 aa).

Residues 1–85 are recognition domain (REC1-N); it reads MSRLEARTRY…EKVRQVMVFE (85 aa). The recognition domain (REC2) stretch occupies residues 86–153; sequence SETTKKIKEL…ERSFIFEARK (68 aa). The tract at residues 154–211 is recognition domain (REC1-C); sequence QELAQLEKERWAVVKELGKGSGLYWCNLEDVVNSYDIGRKKAKAAGGEMRFHRWDGTG. Residues 212–314 are wedge domain (WED); sequence KVTVRFQKGL…RYKLNLVLEI (103 aa). The linker stretch occupies residues 315-329; it reads LGENTNRILPALEGT. The ruvC-I stretch occupies residues 330–540; it reads AAIDLGWRTV…KNHVEFTYVP (211 aa). Positions 541 to 575 are target nucleic-acid binding (TNB); that stretch reads AENTTITCHKCGHKEKFDAAAQIIHTCSTCGELWD. Residues Cys548, Cys551, Cys567, and Cys570 each coordinate Zn(2+). A ruvC-II region spans residues 576 to 594; that stretch reads QDYNAAKNLLAFSQKGGVK. Asp577 contacts Mg(2+).

It belongs to the CRISPR-associated DNA-binding protein Cas12m family. It depends on Mg(2+) as a cofactor. The cofactor is Zn(2+).

In terms of biological role, CRISPR (clustered regularly interspaced short palindromic repeat), is an adaptive immune system that provides protection against mobile genetic elements (viruses, transposable elements and conjugative plasmids). CRISPR clusters contain sequences complementary to antecedent mobile elements and target invading nucleic acids. CRISPR clusters are transcribed and processed into CRISPR RNA (crRNA). Recognizes a short motif in the CRISPR repeat sequences (the 5' PAM or protospacer adjacent motif, 5'-C/TCN-3' in this organism) to help distinguish self versus nonself, as targets within the bacterial CRISPR locus do not have PAMs. Upon expression in E.coli as a CRISPR locus inhibits plasmid propagation when targeted to regions essential for plasmid propagation (replication origin but not a selectable marker), probably by inhibiting transcription. Cas12m-crRNA binds DNA in a PAM-dependent, crRNA-guided fashion. Upon expression in E.coli as a CRISPR region preferentially binds to its associated crRNA. Probably required for pre-crRNA processing to mature crRNA. The protein is CRISPR-associated DNA-binding protein Cas12m of Thermanaerosceptrum fracticalcis.